Reading from the N-terminus, the 340-residue chain is Eukaryotic translation initiation factor 3 subunit I (340 aa).

5 WD repeats span residues 8–47 (GHER…RLGT), 50–91 (GHQG…KVWD), 150–189 (CTES…QLEN), 194–233 (EFDH…ILKT), and 291–330 (GHFG…FDFM).

This sequence belongs to the eIF-3 subunit I family. In terms of assembly, component of the eukaryotic translation initiation factor 3 (eIF-3) complex.

The protein resides in the cytoplasm. Its function is as follows. Component of the eukaryotic translation initiation factor 3 (eIF-3) complex, which is involved in protein synthesis of a specialized repertoire of mRNAs and, together with other initiation factors, stimulates binding of mRNA and methionyl-tRNAi to the 40S ribosome. The eIF-3 complex specifically targets and initiates translation of a subset of mRNAs involved in cell proliferation. The protein is Eukaryotic translation initiation factor 3 subunit I (tif34) of Aspergillus fumigatus (strain CBS 144.89 / FGSC A1163 / CEA10) (Neosartorya fumigata).